Consider the following 166-residue polypeptide: HTH-type transcriptional regulator PrsX (166 aa).

Residues 25–159 (EHLLMQLCIR…FEVINKKLLA (135 aa)) form the HTH marR-type domain.

It is found in the cytoplasm. This is HTH-type transcriptional regulator PrsX (prsX) from Escherichia coli O6:H1 (strain CFT073 / ATCC 700928 / UPEC).